The sequence spans 290 residues: ATP synthase gamma chain (290 aa).

This sequence belongs to the ATPase gamma chain family. F-type ATPases have 2 components, CF(1) - the catalytic core - and CF(0) - the membrane proton channel. CF(1) has five subunits: alpha(3), beta(3), gamma(1), delta(1), epsilon(1). CF(0) has three main subunits: a, b and c.

It localises to the cell inner membrane. Its function is as follows. Produces ATP from ADP in the presence of a proton gradient across the membrane. The gamma chain is believed to be important in regulating ATPase activity and the flow of protons through the CF(0) complex. The sequence is that of ATP synthase gamma chain from Bacteroides fragilis (strain ATCC 25285 / DSM 2151 / CCUG 4856 / JCM 11019 / LMG 10263 / NCTC 9343 / Onslow / VPI 2553 / EN-2).